The sequence spans 315 residues: Protoheme IX farnesyltransferase (315 aa).

Transmembrane regions (helical) follow at residues isoleucine 38–proline 58, leucine 62–methionine 82, leucine 111–tryptophan 131, leucine 132–leucine 152, asparagine 159–threonine 179, tryptophan 184–leucine 204, isoleucine 233–threonine 253, tryptophan 255–leucine 275, and leucine 293–phenylalanine 313.

The protein belongs to the UbiA prenyltransferase family. Protoheme IX farnesyltransferase subfamily.

It is found in the cell membrane. The enzyme catalyses heme b + (2E,6E)-farnesyl diphosphate + H2O = Fe(II)-heme o + diphosphate. It functions in the pathway porphyrin-containing compound metabolism; heme O biosynthesis; heme O from protoheme: step 1/1. In terms of biological role, converts heme B (protoheme IX) to heme O by substitution of the vinyl group on carbon 2 of heme B porphyrin ring with a hydroxyethyl farnesyl side group. The chain is Protoheme IX farnesyltransferase from Streptomyces coelicolor (strain ATCC BAA-471 / A3(2) / M145).